The sequence spans 684 residues: Putative glucan endo-1,3-beta-glucosidase btgC (684 aa).

The span at 1 to 10 shows a compositional bias: polar residues; that stretch reads MAGVNRSFSY. Disordered regions lie at residues 1–38, 124–143, and 157–182; these read MAGV…LYST, AERD…APPD, and DSYS…TTPS. Over 1-302 the chain is Cytoplasmic; sequence MAGVNRSFSY…HIIGGGSRKR (302 aa). Basic and acidic residues predominate over residues 12-32; sequence RGDDALLRDDEREISPLRSAE. A helical; Signal-anchor for type II membrane protein transmembrane segment spans residues 303–323; the sequence is GWIVGLILAAVIVAAIVGGAV. Over 324-684 the chain is Extracellular; that stretch reads GGILGHQEHD…IPDCGGKTIT (361 aa). The segment at 330-358 is disordered; that stretch reads QEHDGDTSSSSSSSSSSGTGSGGSDKGDG. The segment covering 336-347 has biased composition (low complexity); the sequence is TSSSSSSSSSSG. N-linked (GlcNAc...) asparagine glycosylation is found at N404, N427, N455, and N474. Residue E487 is the Proton donor of the active site. E586 functions as the Nucleophile in the catalytic mechanism. Residue N631 is glycosylated (N-linked (GlcNAc...) asparagine).

This sequence belongs to the glycosyl hydrolase 17 family.

It localises to the cell membrane. The catalysed reaction is Hydrolysis of (1-&gt;3)-beta-D-glucosidic linkages in (1-&gt;3)-beta-D-glucans.. Its function is as follows. Glucanases play a role in cell expansion during growth, in cell-cell fusion during mating, and in spore release during sporulation. This enzyme may be involved in beta-glucan degradation. Active on laminarin and lichenan. This is Putative glucan endo-1,3-beta-glucosidase btgC (btgC) from Aspergillus niger (strain ATCC MYA-4892 / CBS 513.88 / FGSC A1513).